Consider the following 396-residue polypeptide: Lysophospholipid transporter LplT (396 aa).

At 1-17 the chain is on the periplasmic side; that stretch reads MSESVHTNTSLWSKGMK. Residues 18 to 38 form a helical membrane-spanning segment; sequence AVIVAQFLSAFGDNALLFATL. Over 39 to 52 the chain is Cytoplasmic; sequence ALLKAQFYPEWSQP. The helical transmembrane segment at 53–73 threads the bilayer; the sequence is ILQMVFVGAYILLAPFVGQVA. Topologically, residues 74–90 are periplasmic; sequence DSFAKGRVMMFANGLKL. The chain crosses the membrane as a helical span at residues 91–111; it reads LGAASICFGINPFLGYTLVGV. At 112–144 the chain is on the cytoplasmic side; that stretch reads GAAAYSPAKYGILGELTTGSKLVKANGLMEASA. The chain crosses the membrane as a helical span at residues 145–165; that stretch reads IAAILLGSVAGGVLADWHVLV. Residue Ala166 is a topological domain, periplasmic. Residues 167 to 187 traverse the membrane as a helical segment; it reads LAACALAYGGAVVANIYIPKL. Over 188–225 the chain is Cytoplasmic; sequence AARPGQSWNLINMTRSFLNACTSLWCNGETRFSLVGTS. A helical transmembrane segment spans residues 226-246; sequence LFWGAGVTLRFLLVLWVPVAL. The Periplasmic segment spans residues 247-255; that stretch reads GITDNATPT. Residues 256–276 traverse the membrane as a helical segment; it reads YLNAMVAIGIVVGAGAAAKLV. Topologically, residues 277-279 are cytoplasmic; the sequence is TLE. A helical membrane pass occupies residues 280–300; the sequence is TVSRCMPAGILIGVVVPIFSL. At 301–303 the chain is on the periplasmic side; it reads QHE. The chain crosses the membrane as a helical span at residues 304-324; it reads LLPAYALLMLIGVLGGFFVVP. At 325-342 the chain is on the cytoplasmic side; that stretch reads LNALLQERGKKSVGAGNA. A helical membrane pass occupies residues 343–363; it reads IAVQNLGENSAMLLMLGIYSL. Over 364-365 the chain is Periplasmic; that stretch reads AV. A helical transmembrane segment spans residues 366–386; sequence MVGIPVVPIGIGFGALFALAI. Topologically, residues 387–396 are cytoplasmic; sequence TALWIWQRRH.

Belongs to the major facilitator superfamily. LplT (TC 2.A.1.42) family.

It is found in the cell inner membrane. Functionally, catalyzes the facilitated diffusion of 2-acyl-glycero-3-phosphoethanolamine (2-acyl-GPE) into the cell. In Shigella flexneri, this protein is Lysophospholipid transporter LplT.